The following is a 227-amino-acid chain: PKHD-type hydroxylase Mnod_1077 (227 aa).

The region spanning 78 to 178 is the Fe2OG dioxygenase domain; the sequence is RVLPPLFNRY…RWSAFFWSQS (101 aa). The Fe cation site is built by His96, Asp98, and His159. Position 169 (Arg169) interacts with 2-oxoglutarate.

It depends on Fe(2+) as a cofactor. Requires L-ascorbate as cofactor.

This chain is PKHD-type hydroxylase Mnod_1077, found in Methylobacterium nodulans (strain LMG 21967 / CNCM I-2342 / ORS 2060).